The following is a 610-amino-acid chain: Glutamine--fructose-6-phosphate aminotransferase [isomerizing] (610 aa).

The active-site Nucleophile; for GATase activity is the Cys2. Residues 2–219 (CGIVGAVAQR…EGDVAEITRR (218 aa)) form the Glutamine amidotransferase type-2 domain. SIS domains are found at residues 287–427 (ADEL…LRGM) and 459–600 (LAEG…VDQP). The For Fru-6P isomerization activity role is filled by Lys605.

Homodimer.

It is found in the cytoplasm. It carries out the reaction D-fructose 6-phosphate + L-glutamine = D-glucosamine 6-phosphate + L-glutamate. Catalyzes the first step in hexosamine metabolism, converting fructose-6P into glucosamine-6P using glutamine as a nitrogen source. This chain is Glutamine--fructose-6-phosphate aminotransferase [isomerizing], found in Pectobacterium atrosepticum (strain SCRI 1043 / ATCC BAA-672) (Erwinia carotovora subsp. atroseptica).